The primary structure comprises 64 residues: Large ribosomal subunit protein bL32 (64 aa).

A compositionally biased stretch (basic residues) spans 1 to 15 (MAVPKRKVSKSRRDS). Positions 1-21 (MAVPKRKVSKSRRDSRRAQTF) are disordered.

This sequence belongs to the bacterial ribosomal protein bL32 family.

In Symbiobacterium thermophilum (strain DSM 24528 / JCM 14929 / IAM 14863 / T), this protein is Large ribosomal subunit protein bL32.